Reading from the N-terminus, the 216-residue chain is CASP-like protein 2U1 (216 aa).

A disordered region spans residues 1 to 30; the sequence is MKQDTEMGEATNGYIGTPGTVPVSHAGNDS. The Cytoplasmic portion of the chain corresponds to 1 to 37; that stretch reads MKQDTEMGEATNGYIGTPGTVPVSHAGNDSGMRRMRT. The helical transmembrane segment at 38-58 threads the bilayer; it reads ASILMRLTAMALCVTALVTMV. The Extracellular segment spans residues 59-86; it reads TDKQTHYFNFASTTIVKTAEYTNVLALK. A helical transmembrane segment spans residues 87–107; sequence VFVYTNGVIAGYSLLQALWTI. The Cytoplasmic segment spans residues 108–128; it reads VAKSSYSTSKARLWTTFFLDQ. Residues 129 to 148 form a helical membrane-spanning segment; sequence FIVYVLIGVTGAATEVAYIA. Residues 149 to 170 are Extracellular-facing; it reads EKGESDVAWPKQCNNFGRFCSQ. A helical membrane pass occupies residues 171-191; it reads VGASVIVCFVAILTLVFLAVL. Residues 192-216 lie on the Cytoplasmic side of the membrane; the sequence is SAKQLFIHERPSRTTRKDGYYTSNQ.

Belongs to the Casparian strip membrane proteins (CASP) family. In terms of assembly, homodimer and heterodimers.

Its subcellular location is the cell membrane. This is CASP-like protein 2U1 from Marchantia polymorpha (Common liverwort).